The primary structure comprises 81 residues: Protein translocase subunit SecE (81 aa).

Residues 50–70 (VAVILMVILVSTVIYFVDQIF) form a helical membrane-spanning segment.

This sequence belongs to the SecE/SEC61-gamma family. In terms of assembly, component of the Sec protein translocase complex. Heterotrimer consisting of SecY, SecE and SecG subunits. The heterotrimers can form oligomers, although 1 heterotrimer is thought to be able to translocate proteins. Interacts with the ribosome. Interacts with SecDF, and other proteins may be involved. Interacts with SecA.

It localises to the cell inner membrane. The protein localises to the cellular thylakoid membrane. Functionally, essential subunit of the Sec protein translocation channel SecYEG. Clamps together the 2 halves of SecY. May contact the channel plug during translocation. The polypeptide is Protein translocase subunit SecE (Synechocystis sp. (strain ATCC 27184 / PCC 6803 / Kazusa)).